Here is a 131-residue protein sequence, read N- to C-terminus: Lymphocyte antigen 6E (131 aa).

The first 20 residues, methionine 1–serine 20, serve as a signal peptide directing secretion. The 81-residue stretch at leucine 21 to serine 101 folds into the UPAR/Ly6 domain. Cystine bridges form between cysteine 23–cysteine 48, cysteine 26–cysteine 35, cysteine 41–cysteine 71, cysteine 75–cysteine 92, and cysteine 93–cysteine 98. Asparagine 99 carries an N-linked (GlcNAc...) asparagine glycan. Serine 101 carries GPI-anchor amidated serine lipidation. Residues alanine 102 to proline 131 constitute a propeptide, removed in mature form.

In terms of assembly, interacts with CHRNA4. In terms of tissue distribution, widely expressed, predominantly in liver, kidney, ovary, spleen and peripheral blood Leukocytes.

It is found in the cell membrane. In terms of biological role, GPI-anchored cell surface protein that regulates T-lymphocytes proliferation, differentiation, and activation. Regulates the T-cell receptor (TCR) signaling by interacting with component CD3Z/CD247 at the plasma membrane, leading to CD3Z/CD247 phosphorylation modulation. Restricts the entry of human coronaviruses, including SARS-CoV, MERS-CoV and SARS-CoV-2, by interfering with spike protein-mediated membrane fusion. Also plays an essential role in placenta formation by acting as the main receptor for syncytin-A (SynA). Therefore, participates in the normal fusion of syncytiotrophoblast layer I (SynT-I) and in the proper morphogenesis of both fetal and maternal vasculatures within the placenta. May also act as a modulator of nicotinic acetylcholine receptors (nAChRs) activity. Functionally, (Microbial infection) Promotes entry, likely through an enhanced virus-cell fusion process, of various viruses including HIV-1, West Nile virus, dengue virus and Zika virus. In contrast, the paramyxovirus PIV5, which enters at the plasma membrane, does not require LY6E. Mechanistically, adopts a microtubule-like organization upon viral infection and enhances viral uncoating after endosomal escape. The chain is Lymphocyte antigen 6E from Homo sapiens (Human).